The following is a 521-amino-acid chain: Potassium/proton antiporter CemA (521 aa).

A run of 5 helical transmembrane segments spans residues 68–88, 294–314, 399–419, 446–466, and 481–501; these read FVFI…LLNI, ALAS…ISFP, ILHL…FISG, ILLL…EILI, and IISC…KYWI.

This sequence belongs to the CemA family.

Its subcellular location is the plastid. It is found in the chloroplast inner membrane. It catalyses the reaction K(+)(in) + H(+)(out) = K(+)(out) + H(+)(in). Its function is as follows. Contributes to K(+)/H(+) antiport activity by supporting proton efflux to control proton extrusion and homeostasis in chloroplasts in a light-dependent manner to modulate photosynthesis. Prevents excessive induction of non-photochemical quenching (NPQ) under continuous-light conditions. Indirectly promotes efficient inorganic carbon uptake into chloroplasts. This Huperzia lucidula (Shining clubmoss) protein is Potassium/proton antiporter CemA.